Reading from the N-terminus, the 245-residue chain is Nisin immunity protein (245 aa).

Positions 1 to 19 (MRRYLILIVALIGITGLSG) are cleaved as a signal peptide. Cys-20 carries N-palmitoyl cysteine lipidation. The S-diacylglycerol cysteine moiety is linked to residue Cys-20.

It localises to the cell membrane. Involved in immunity against exogenously supplied nisin. This is Nisin immunity protein (nisI) from Lactococcus lactis subsp. lactis (Streptococcus lactis).